Here is a 463-residue protein sequence, read N- to C-terminus: 23S rRNA (uracil(1939)-C(5))-methyltransferase RlmD (463 aa).

The 71-residue stretch at 6 to 76 folds into the TRAM domain; sequence KSRKPQQPEY…KRLEEAEMVE (71 aa). Cys-90, Cys-96, Cys-99, and Cys-178 together coordinate [4Fe-4S] cluster. Residues Gln-288, Phe-317, Asn-322, Glu-341, Asp-368, and Asp-389 each contribute to the S-adenosyl-L-methionine site. The active-site Nucleophile is Cys-415.

Belongs to the class I-like SAM-binding methyltransferase superfamily. RNA M5U methyltransferase family. RlmD subfamily.

It carries out the reaction uridine(1939) in 23S rRNA + S-adenosyl-L-methionine = 5-methyluridine(1939) in 23S rRNA + S-adenosyl-L-homocysteine + H(+). Functionally, catalyzes the formation of 5-methyl-uridine at position 1939 (m5U1939) in 23S rRNA. In Acinetobacter baumannii (strain AYE), this protein is 23S rRNA (uracil(1939)-C(5))-methyltransferase RlmD.